The following is a 107-amino-acid chain: UPF0145 protein MAB_3451c (107 aa).

The protein belongs to the UPF0145 family.

The polypeptide is UPF0145 protein MAB_3451c (Mycobacteroides abscessus (strain ATCC 19977 / DSM 44196 / CCUG 20993 / CIP 104536 / JCM 13569 / NCTC 13031 / TMC 1543 / L948) (Mycobacterium abscessus)).